The following is a 432-amino-acid chain: Cyclic 2,3-diphosphoglycerate synthetase (432 aa).

The protein belongs to the cyclic 2,3-diphosphoglycerate synthetase family.

It is found in the cytoplasm. It carries out the reaction (2R)-2,3-bisphosphoglycerate + ATP + H(+) = cyclic (2R)-2,3-bisphosphoglycerate + ADP + phosphate. Functionally, catalyzes the formation of cyclic 2,3-diphosphoglycerate (cDPG) by formation of an intramolecular phosphoanhydride bond at the expense of ATP. The polypeptide is Cyclic 2,3-diphosphoglycerate synthetase (Thermococcus onnurineus (strain NA1)).